The following is a 235-amino-acid chain: Putative cobalt transport protein CbiM 2 (235 aa).

A run of 7 helical transmembrane segments spans residues 8–28 (LPAI…AYGV), 40–60 (GILP…SLKM), 74–94 (GIGA…IVLI), 107–127 (TLGA…YLIY), 135–155 (LNFY…TYIV), 160–180 (LALA…SSFS), and 185–205 (IFAI…ALLF).

The protein belongs to the CbiM family. Forms an energy-coupling factor (ECF) transporter complex composed of an ATP-binding protein (A component, CbiO), a transmembrane protein (T component, CbiQ) and 2 possible substrate-capture proteins (S components, CbiM and CbiN) of unknown stoichimetry.

The protein resides in the cell membrane. Its pathway is cofactor biosynthesis; adenosylcobalamin biosynthesis. Part of the energy-coupling factor (ECF) transporter complex CbiMNOQ involved in cobalt import. In Methanosarcina barkeri (strain Fusaro / DSM 804), this protein is Putative cobalt transport protein CbiM 2.